The chain runs to 323 residues: tRNA U34 carboxymethyltransferase (323 aa).

Residues Lys91, Trp105, Lys110, Gly130, 181-182 (IE), Met196, Tyr200, and Arg315 contribute to the carboxy-S-adenosyl-L-methionine site.

Belongs to the class I-like SAM-binding methyltransferase superfamily. CmoB family. In terms of assembly, homotetramer.

It carries out the reaction carboxy-S-adenosyl-L-methionine + 5-hydroxyuridine(34) in tRNA = 5-carboxymethoxyuridine(34) in tRNA + S-adenosyl-L-homocysteine + H(+). Catalyzes carboxymethyl transfer from carboxy-S-adenosyl-L-methionine (Cx-SAM) to 5-hydroxyuridine (ho5U) to form 5-carboxymethoxyuridine (cmo5U) at position 34 in tRNAs. The protein is tRNA U34 carboxymethyltransferase of Yersinia pseudotuberculosis serotype IB (strain PB1/+).